The chain runs to 380 residues: 4-hydroxy-3-methylbut-2-en-1-yl diphosphate synthase (flavodoxin) (380 aa).

[4Fe-4S] cluster is bound by residues cysteine 273, cysteine 276, cysteine 308, and glutamate 315.

It belongs to the IspG family. It depends on [4Fe-4S] cluster as a cofactor.

It catalyses the reaction (2E)-4-hydroxy-3-methylbut-2-enyl diphosphate + oxidized [flavodoxin] + H2O + 2 H(+) = 2-C-methyl-D-erythritol 2,4-cyclic diphosphate + reduced [flavodoxin]. Its pathway is isoprenoid biosynthesis; isopentenyl diphosphate biosynthesis via DXP pathway; isopentenyl diphosphate from 1-deoxy-D-xylulose 5-phosphate: step 5/6. Converts 2C-methyl-D-erythritol 2,4-cyclodiphosphate (ME-2,4cPP) into 1-hydroxy-2-methyl-2-(E)-butenyl 4-diphosphate. The sequence is that of 4-hydroxy-3-methylbut-2-en-1-yl diphosphate synthase (flavodoxin) from Leifsonia xyli subsp. xyli (strain CTCB07).